The sequence spans 239 residues: uncharacterized protein (239 aa).

The segment at 193 to 214 (RKRKLNLSDGENKAKSPYSSIS) is disordered.

Its subcellular location is the nucleus. This is an uncharacterized protein from Schizosaccharomyces pombe (strain 972 / ATCC 24843) (Fission yeast).